A 190-amino-acid polypeptide reads, in one-letter code: MKCIVGLGNIGKRFELTRHNIGFEVVDDILERHQFTLDKQKFKGAYTIERLNGEKVLFIEPMTMMNLSGQAVAPLMDYYNVDVEDLIVLYDDLDLEQGQVRLRQKGSAGGHNGMKSIIKMLGTDQFKRIRIGVGRPTNGMSVPDYVLQKFSKEEMIIMEKVIEHSARAVESFIESSRFDHVMNEFNGEVK.

Phe-14 contacts tRNA. His-19 serves as the catalytic Proton acceptor. Residues Met-64, Asn-66, and Asn-112 each coordinate tRNA.

The protein belongs to the PTH family. As to quaternary structure, monomer.

The protein resides in the cytoplasm. The enzyme catalyses an N-acyl-L-alpha-aminoacyl-tRNA + H2O = an N-acyl-L-amino acid + a tRNA + H(+). Functionally, hydrolyzes ribosome-free peptidyl-tRNAs (with 1 or more amino acids incorporated), which drop off the ribosome during protein synthesis, or as a result of ribosome stalling. Its function is as follows. Catalyzes the release of premature peptidyl moieties from peptidyl-tRNA molecules trapped in stalled 50S ribosomal subunits, and thus maintains levels of free tRNAs and 50S ribosomes. The sequence is that of Peptidyl-tRNA hydrolase from Staphylococcus epidermidis (strain ATCC 35984 / DSM 28319 / BCRC 17069 / CCUG 31568 / BM 3577 / RP62A).